Here is a 224-residue protein sequence, read N- to C-terminus: Ribonuclease HII (224 aa).

Residues 33–224 (FHVAGVDEVG…LKERYRNDVS (192 aa)) enclose the RNase H type-2 domain. Positions 39, 40, and 131 each coordinate a divalent metal cation.

The protein belongs to the RNase HII family. Mn(2+) is required as a cofactor. It depends on Mg(2+) as a cofactor.

The protein resides in the cytoplasm. The catalysed reaction is Endonucleolytic cleavage to 5'-phosphomonoester.. In terms of biological role, endonuclease that specifically degrades the RNA of RNA-DNA hybrids. The polypeptide is Ribonuclease HII (Bartonella tribocorum (strain CIP 105476 / IBS 506)).